Reading from the N-terminus, the 1190-residue chain is MAGHEVQYGKHRTRRSFSRIKEVLDLPNLIEIQTDSFQDFLDYGLKEVFEDVLPVSNFTDTMELEFVGYELKEPKYTLEEARAHDANYSAPIYVTFRLVNKETGEIKTQEVFFGEFPIMTEMGTFIINGAERIIVSQLVRSPGVYFNDKVDKNGKVGYGSTVIPNRGAWLELETDSKDIAYTRIDRTRKIPFTTLVRALGFSGDDEIFDIFGDSELVRNTIEKDIHKNPADSRTDEALKEIYERLRPGEPKTAESSRSLLTARFFDPRRYDLAPVGRYKINKKLNLRTRLLNQTLAEHVINGETGEIVLEAGTVLSRDVLEKVEAQFDELNLVEYIPNDNAVLLEPVLLQKFKIVAPKDPERVVTVIGNANPAENVRTVTPADILAEMSYFLNLAEGLGRVDDIDHLGNRRIRAVGELLANQVRIGLTRMERNLRERMSVQDNEVLTPQQIINIRPVTAAIKEFFGSSQLSQFMDQHNPLSELSHKRRLSALGPGGLTRDRAGYEVRDVHYTHYGRMCPIETPEGPNIGLINNLSSYGHLNKYGFIQTPYRKIDRATGTVTNEIVWLTADEEDAYIVAQSTSPLDENNRFVDKIVMGRHQGNNQEFPADSADFMDVSPKQVVAVATACIPFLENDDSNRALMGANMQRQAVPLIDPKAPYVGTGMEYQAAHDSGAAIIAQHDGKVVYADADKVEVRREDGSLDVYHISKFRRSNSGTAYNQRTLVKLGDIVEKGDFIADGPSMENGEMALGQNPIVAYMTWEGYNFEDAVIMSERLVKDDVYTSVHLEEYESETRDTKLGPEEITREIPNVGEDALRNLDEMGIIRIGAEVKEGDILVGKVTPKGEKDLSAEERLLHAIFGDKSREVRDTSLRVPHGADGVVRDVKIFTRANGDELQSGVNMLVRVYIAQKRKIKVGDKMAGRHGNKGVVSRIVPVEDMPYLPDGTPVDIMLNPLGVPSRMNIGQVMELHLGMAARNLGIHIATPVFDGASSEDLWSTVKEAGMDSDAKTILYDGRTGEPFDNRVSVGVMYMIKLHHMVDDKLHARSVGPYSLVTQQPLGGKAQFGGQRFGEMEVWALEAYGASNVLQEILTYKSDDVTGRLKAYEAITKGKPIPKPGVPESFRVLVKELQSLGLDMRVLDEDNNEVELRDLDEGEDDDIIHVDDLEKARAKAAADAAAAFAAEEAEGKE.

It belongs to the RNA polymerase beta chain family. The RNAP catalytic core consists of 2 alpha, 1 beta, 1 beta' and 1 omega subunit. When a sigma factor is associated with the core the holoenzyme is formed, which can initiate transcription.

It catalyses the reaction RNA(n) + a ribonucleoside 5'-triphosphate = RNA(n+1) + diphosphate. In terms of biological role, DNA-dependent RNA polymerase catalyzes the transcription of DNA into RNA using the four ribonucleoside triphosphates as substrates. This chain is DNA-directed RNA polymerase subunit beta, found in Streptococcus suis (strain 98HAH33).